The sequence spans 350 residues: Probable aldo-keto reductase 1 (350 aa).

The active-site Proton donor is Y67. H135 serves as a coordination point for substrate. 214–224 (SPLGKGFFSSG) is an NADP(+) binding site.

It belongs to the aldo/keto reductase family.

The protein is Probable aldo-keto reductase 1 of Oryza sativa subsp. indica (Rice).